We begin with the raw amino-acid sequence, 152 residues long: Ribosome maturation factor RimP (152 aa).

This sequence belongs to the RimP family.

The protein localises to the cytoplasm. Functionally, required for maturation of 30S ribosomal subunits. The polypeptide is Ribosome maturation factor RimP (Elusimicrobium minutum (strain Pei191)).